The primary structure comprises 616 residues: Adenylosuccinate synthetase 2 (616 aa).

The segment at 1–26 (MDKQAERDQSAGPVKTPQETQPPAHN) is disordered. Positions 17–26 (PQETQPPAHN) are enriched in polar residues. Residues 87-93 (GDEGKGK) and 117-119 (GHT) each bind GTP. The Proton acceptor role is filled by aspartate 88. Mg(2+) contacts are provided by aspartate 88 and glycine 117. Residues 88 to 91 (DEGK), 115 to 118 (NAGH), threonine 202, lysine 216, glutamine 328, threonine 343, and lysine 472 each bind IMP. The Proton donor role is filled by histidine 118. A substrate-binding site is contributed by 468–474 (AVTKKPR). GTP contacts are provided by residues arginine 474 and 603–605 (GNG).

The protein belongs to the adenylosuccinate synthetase family. Homodimer. The cofactor is Mg(2+).

The protein resides in the cytoplasm. It carries out the reaction IMP + L-aspartate + GTP = N(6)-(1,2-dicarboxyethyl)-AMP + GDP + phosphate + 2 H(+). It functions in the pathway purine metabolism; AMP biosynthesis via de novo pathway; AMP from IMP: step 1/2. Functionally, plays an important role in the salvage pathway for purine nucleotide biosynthesis. Catalyzes the first committed step in the biosynthesis of AMP from IMP. This chain is Adenylosuccinate synthetase 2, found in Trypanosoma cruzi (strain CL Brener).